The primary structure comprises 619 residues: Cationic amino acid transporter 3 (619 aa).

At 1–36 the chain is on the cytoplasmic side; sequence MPWQAFRRFGQKLVRRRTLESGMAETRLARCLSTLD. A helical transmembrane segment spans residues 37-57; that stretch reads LVALGVGSTLGAGVYVLAGEV. Residues 58 to 61 are Extracellular-facing; that stretch reads AKDK. Residues 62–82 traverse the membrane as a helical segment; that stretch reads AGPSIVICFLVAALSSVLAGL. Residues 83–107 are Cytoplasmic-facing; sequence CYAEFGARVPRSGSAYLYSYVTVGE. The helical transmembrane segment at 108 to 128 threads the bilayer; it reads LWAFTTGWNLILSYVIGTASV. Over 129 to 162 the chain is Extracellular; the sequence is ARAWSSAFDNLIGNHISKTLQGSIALHVPHVLAE. The helical transmembrane segment at 163 to 183 threads the bilayer; it reads YPDFFALGLVLLLTGLLALGA. Residues 184-191 lie on the Cytoplasmic side of the membrane; it reads SESALVTK. The chain crosses the membrane as a helical span at residues 192-212; the sequence is VFTGVNLLVLGFVMISGFVKG. At 213–233 the chain is on the extracellular side; sequence DVHNWKLTEEDYELAMAELND. N232 carries an N-linked (GlcNAc...) asparagine glycan. Residues 234-254 form a helical membrane-spanning segment; that stretch reads TYSLGPLGSGGFVPFGFEGIL. The Cytoplasmic portion of the chain corresponds to 255-285; that stretch reads RGAATCFYAFVGFDCIATTGEEAQNPQRSIP. Residues 286–306 form a helical membrane-spanning segment; sequence MGIVISLSVCFLAYFAVSSAL. At 307-335 the chain is on the extracellular side; that stretch reads TLMMPYYQLQPESPLPEAFLYIGWAPARY. Residues 336–356 form a helical membrane-spanning segment; it reads VVAVGSLCALSTSLLGSMFPM. The Cytoplasmic portion of the chain corresponds to 357 to 382; the sequence is PRVIYAMAEDGLLFRVLARIHTGTRT. A helical membrane pass occupies residues 383–403; sequence PIIATVVSGIIAAFMAFLFKL. At 404–406 the chain is on the extracellular side; the sequence is TDL. Residues 407 to 427 traverse the membrane as a helical segment; it reads VDLMSIGTLLAYSLVSICVLI. The Cytoplasmic segment spans residues 428–475; it reads LRYQPDQETKTGEEVELQEEAITTESEKLTLWGLFFPLNSIPTPLSGQ. The helical transmembrane segment at 476–496 threads the bilayer; sequence IVYVCSSLLAVLLTALCLVLA. At 497-506 the chain is on the extracellular side; the sequence is QWSVPLLSGD. A helical transmembrane segment spans residues 507–527; the sequence is LLWTAVVVLLLLLIIGIIVVI. Residues 528 to 540 are Cytoplasmic-facing; that stretch reads WRQPQSSTPLHFK. The chain crosses the membrane as a helical span at residues 541-561; that stretch reads VPALPLLPLMSIFVNIYLMMQ. Residues 562–569 lie on the Extracellular side of the membrane; it reads MTAGTWAR. Residues 570-590 traverse the membrane as a helical segment; sequence FGVWMLIGFAIYFGYGIQHSL. Topologically, residues 591–619 are cytoplasmic; that stretch reads EEIKSNQPSRKSRAKTVDLDPGTLYVHSV. Residue T606 is modified to Phosphothreonine. S618 carries the phosphoserine modification.

The protein belongs to the amino acid-polyamine-organocation (APC) superfamily. Cationic amino acid transporter (CAT) (TC 2.A.3.3) family. In terms of processing, N-glycosylated. In terms of tissue distribution, highly expressed in thymus, uterus and testis. Detected at lower levels in brain, mammary gland, prostate, salivary gland and fetal spleen. In brain, highest expression in thalamus, hippocampus and amygdala.

It localises to the cell membrane. It carries out the reaction L-arginine(in) = L-arginine(out). It catalyses the reaction L-lysine(in) = L-lysine(out). The catalysed reaction is L-ornithine(in) = L-ornithine(out). Its function is as follows. Uniporter that mediates the uptake of cationic L-amino acids such as L-arginine, L-lysine and L-ornithine. The transport is sodium ions- and pH-independent, moderately trans-stimulated and is mediated by passive diffusion. This chain is Cationic amino acid transporter 3, found in Homo sapiens (Human).